Consider the following 381-residue polypeptide: Homoserine O-succinyltransferase (381 aa).

Residues 45-360 (NAVLVCHALN…PHGHDAFLLD (316 aa)) form the AB hydrolase-1 domain. Ser-151 acts as the Nucleophile in catalysis. A substrate-binding site is contributed by Arg-221. Active-site residues include Asp-321 and His-354. Asp-355 is a substrate binding site.

This sequence belongs to the AB hydrolase superfamily. MetX family. In terms of assembly, homodimer.

It is found in the cytoplasm. The catalysed reaction is L-homoserine + succinyl-CoA = O-succinyl-L-homoserine + CoA. Its pathway is amino-acid biosynthesis; L-methionine biosynthesis via de novo pathway; O-succinyl-L-homoserine from L-homoserine: step 1/1. Transfers a succinyl group from succinyl-CoA to L-homoserine, forming succinyl-L-homoserine. The chain is Homoserine O-succinyltransferase from Paraburkholderia phytofirmans (strain DSM 17436 / LMG 22146 / PsJN) (Burkholderia phytofirmans).